Here is a 364-residue protein sequence, read N- to C-terminus: Delta(7)-sterol 5(6)-desaturase (364 aa).

A run of 3 helical transmembrane segments spans residues 94 to 114 (FFSLWAVVTVFGLLLYLITAS), 142 to 162 (LAVSAIPTMSLLTVPWFMLEL), and 181 to 201 (KLLIEYATFIFFTDCGIYLAH). A Fatty acid hydroxylase domain is found at 188 to 312 (TFIFFTDCGI…FTTLWDRLGG (125 aa)). The short motif at 201 to 205 (HRWLH) is the Histidine box-1 element. Positions 214–218 (HKPHH) match the Histidine box-2 motif. A helical membrane pass occupies residues 249–269 (ILPLHKISYLILFTFVNFWSV). A Histidine box-3 motif is present at residues 289 to 293 (HTVHH).

Belongs to the sterol desaturase family. Requires Fe cation as cofactor.

It localises to the endoplasmic reticulum membrane. The enzyme catalyses a Delta(7)-sterol + 2 Fe(II)-[cytochrome b5] + O2 + 2 H(+) = a Delta(5),Delta(7)-sterol + 2 Fe(III)-[cytochrome b5] + 2 H2O. It participates in steroid metabolism; ergosterol biosynthesis; ergosterol from zymosterol: step 3/5. Catalyzes the introduction of a C-5 double bond in the B ring of ergosterol. May contribute to the regulation of ergosterol biosynthesis. The chain is Delta(7)-sterol 5(6)-desaturase (ERG3) from Candida glabrata (strain ATCC 2001 / BCRC 20586 / JCM 3761 / NBRC 0622 / NRRL Y-65 / CBS 138) (Yeast).